We begin with the raw amino-acid sequence, 684 residues long: Glycine--tRNA ligase beta subunit (684 aa).

Belongs to the class-II aminoacyl-tRNA synthetase family. As to quaternary structure, tetramer of two alpha and two beta subunits.

The protein resides in the cytoplasm. It catalyses the reaction tRNA(Gly) + glycine + ATP = glycyl-tRNA(Gly) + AMP + diphosphate. This Pseudomonas syringae pv. tomato (strain ATCC BAA-871 / DC3000) protein is Glycine--tRNA ligase beta subunit.